A 132-amino-acid chain; its full sequence is Snaclec bothroinsularin subunit alpha (132 aa).

3 cysteine pairs are disulfide-bonded: Cys2-Cys13, Cys30-Cys127, and Cys102-Cys119. The region spanning 9–128 (YGQYCYKFFQ…CGQQNPFVCK (120 aa)) is the C-type lectin domain.

Belongs to the snaclec family. As to quaternary structure, heterodimer of subunits alpha and beta; disulfide-linked. As to expression, expressed by the venom gland.

It localises to the secreted. In terms of biological role, thrombin and prothrombin (F2) inhibitor. The IC(50) of thrombin-induced platelet aggregation and fibrinocoagulation is 62 and 35 nM, respectively. Its inhibitory activity is at least 10-fold lower than that observed for other thrombin inhibitors. The protein is Snaclec bothroinsularin subunit alpha of Bothrops insularis (Golden lancehead).